The chain runs to 505 residues: MGRVVAELVSSLLGLWLLLCSCGCPEGAELRAPPDKIAIIGAGIGGTSAAYYLRQKFGKDVKIDLFEREEVGGRLATMMVQGQEYEAGGSVIHPLNLHMKRFVKDLGLSAVQASGGLLGIYNGETLVFEESNWFIINVIKLVWRYGFQSLRMHMWVEDVLDKFMRIYRYQSHDYAFSSVEKLLHALGGDDFLGMLNRTLLETLQKAGFSEKFLNEMIAPVMRVNYGQSTDINAFVGAVSLSCSDSGLWAVEGGNKLVCSGLLQASKSNLISGSVMYIEEKTKTKYTGNPTKMYEVVYQIGTETRSDFYDIVLVATPLNRKMSNITFLNFDPPIEEFHQYYQHIVTTLVKGELNTSIFSSRPIDKFGLNTVLTTDNSDLFINSIGIVPSVREKEDPEPSTDGTYVWKIFSQETLTKAQILKLFLSYDYAVKKPWLAYPHYKPPEKCPSIILHDRLYYLNGIECAASAMEMSAIAAHNAALLAYHRWNGHTDMIDQDGLYEKLKTEL.

An N-terminal signal peptide occupies residues 1-27 (MGRVVAELVSSLLGLWLLLCSCGCPEG). Residues Asn196, Asn323, and Asn353 are each glycosylated (N-linked (GlcNAc...) asparagine).

It belongs to the prenylcysteine oxidase family. FAD serves as cofactor. In terms of tissue distribution, widely expressed.

The protein resides in the lysosome. It catalyses the reaction an S-polyprenyl-L-cysteine + O2 + H2O = a polyprenal + L-cysteine + H2O2. The enzyme catalyses S-(2E,6E)-farnesyl-L-cysteine + O2 + H2O = (2E,6E)-farnesal + L-cysteine + H2O2. It carries out the reaction [(2E,6E,10E)-geranylgeranyl]-L-cysteine + O2 + H2O = (2E,6E,10E)-geranylgeranial + L-cysteine + H2O2. Functionally, prenylcysteine oxidase that cleaves the thioether bond of prenyl-L-cysteines, such as farnesylcysteine and geranylgeranylcysteine. Only active against free prenylcysteines and not prenylcysteine residues within prenylated proteins or peptides. Involved in the final step in the degradation of prenylated proteins, by degrading prenylcysteines after the protein has been degraded. The sequence is that of Prenylcysteine oxidase 1 from Homo sapiens (Human).